A 541-amino-acid polypeptide reads, in one-letter code: Testis-specific chromodomain protein Y 2 (541 aa).

In terms of domain architecture, Chromo spans 6-66 (FEVEAIVDKR…RQTEKQKKLT (61 aa)). The disordered stretch occupies residues 72 to 104 (RIFSNNARRRTSRSTKANYSKNSPKTPVTDKHH). Residues 87 to 97 (KANYSKNSPKT) show a composition bias toward polar residues.

Testis specific.

It is found in the nucleus. The catalysed reaction is L-lysyl-[protein] + acetyl-CoA = N(6)-acetyl-L-lysyl-[protein] + CoA + H(+). Functionally, may have histone acetyltransferase activity. The polypeptide is Testis-specific chromodomain protein Y 2 (CDY2A) (Homo sapiens (Human)).